A 476-amino-acid polypeptide reads, in one-letter code: Aspartyl/glutamyl-tRNA(Asn/Gln) amidotransferase subunit B (476 aa).

Belongs to the GatB/GatE family. GatB subfamily. In terms of assembly, heterotrimer of A, B and C subunits.

It carries out the reaction L-glutamyl-tRNA(Gln) + L-glutamine + ATP + H2O = L-glutaminyl-tRNA(Gln) + L-glutamate + ADP + phosphate + H(+). The enzyme catalyses L-aspartyl-tRNA(Asn) + L-glutamine + ATP + H2O = L-asparaginyl-tRNA(Asn) + L-glutamate + ADP + phosphate + 2 H(+). Functionally, allows the formation of correctly charged Asn-tRNA(Asn) or Gln-tRNA(Gln) through the transamidation of misacylated Asp-tRNA(Asn) or Glu-tRNA(Gln) in organisms which lack either or both of asparaginyl-tRNA or glutaminyl-tRNA synthetases. The reaction takes place in the presence of glutamine and ATP through an activated phospho-Asp-tRNA(Asn) or phospho-Glu-tRNA(Gln). The polypeptide is Aspartyl/glutamyl-tRNA(Asn/Gln) amidotransferase subunit B (Laribacter hongkongensis (strain HLHK9)).